The sequence spans 449 residues: Xylose isomerase (449 aa).

Catalysis depends on residues histidine 103 and aspartate 106. Mg(2+)-binding residues include glutamate 234, glutamate 270, histidine 273, aspartate 298, aspartate 309, aspartate 311, and aspartate 342.

Belongs to the xylose isomerase family. As to quaternary structure, homotetramer. The cofactor is Mg(2+).

Its subcellular location is the cytoplasm. The enzyme catalyses alpha-D-xylose = alpha-D-xylulofuranose. Involved in D-xylose catabolism. This Lactiplantibacillus pentosus (Lactobacillus pentosus) protein is Xylose isomerase (xylA).